A 244-amino-acid chain; its full sequence is uncharacterized protein (244 aa).

The next 4 membrane-spanning stretches (helical) occupy residues 20-42, 49-67, 82-101, and 108-125; these read TITA…VVLI, FVYI…ATKV, TPSI…ASVF, and AFLV…ATPI.

Its subcellular location is the cell membrane. This is an uncharacterized protein from Archaeoglobus fulgidus (strain ATCC 49558 / DSM 4304 / JCM 9628 / NBRC 100126 / VC-16).